Consider the following 74-residue polypeptide: Mu-Sparatoxin-Hp2 (74 aa).

The signal sequence occupies residues 1 to 20 (MKIIVLMMMLFAAFSAVVLA). Positions 21-35 (DKSIEDAALDTVMDR) are excised as a propeptide. 3 disulfides stabilise this stretch: Cys42/Cys57, Cys49/Cys62, and Cys56/Cys66. The residue at position 73 (Leu73) is a Leucine amide.

In terms of tissue distribution, expressed by the venom gland.

The protein localises to the secreted. In terms of biological role, weakly nhibits voltage-gated sodium channels Nav1.7/SCN9A. High concentration of the toxin (3 uM) inhibits Nav1.7/SCN9A currents by 80%. The polypeptide is Mu-Sparatoxin-Hp2 (Heteropoda pingtungensis (Pingtung huntsman spider)).